A 47-amino-acid polypeptide reads, in one-letter code: Defensin-like protein 2 (47 aa).

4 disulfides stabilise this stretch: cysteine 5-cysteine 47, cysteine 16-cysteine 36, cysteine 22-cysteine 43, and cysteine 26-cysteine 45.

The protein belongs to the DEFL family.

Functionally, fabatins have antibacterial activity against Gram-positive and Gram-negative bacteria. High activity against P.aeruginosa. No activity against S.cerevisiae and C.albicans. The chain is Defensin-like protein 2 from Vicia faba (Broad bean).